Reading from the N-terminus, the 211-residue chain is Endo-1,4-beta-xylanase 5 (211 aa).

Residues 1–16 (MKVTAAFASLLLTAFA) form the signal peptide. The 192-residue stretch at 19–210 (APEPVLVSRS…GVGSASVTIS (192 aa)) folds into the GH11 domain. Glu-106 functions as the Nucleophile in the catalytic mechanism. Residue Glu-197 is the Proton donor of the active site.

This sequence belongs to the glycosyl hydrolase 11 (cellulase G) family.

Its subcellular location is the secreted. It catalyses the reaction Endohydrolysis of (1-&gt;4)-beta-D-xylosidic linkages in xylans.. The protein operates within glycan degradation; xylan degradation. In terms of biological role, endo-1,4-beta-xylanase involved in the hydrolysis of xylan, a major structural heterogeneous polysaccharide found in plant biomass representing the second most abundant polysaccharide in the biosphere, after cellulose. This chain is Endo-1,4-beta-xylanase 5 (XYN5), found in Aspergillus niger.